Here is a 3423-residue protein sequence, read N- to C-terminus: Genome polyprotein (3423 aa).

A disordered region spans residues Met1 to Ser25. Residues Met1 to Arg104 lie on the Cytoplasmic side of the membrane. Residues Leu37 to Val72 form a hydrophobic; homodimerization of capsid protein C region. Positions Gly105–Ala122 are cleaved as a propeptide — ER anchor for capsid protein C, removed in mature form by serine protease NS3. Residues Gly105 to Val125 traverse the membrane as a helical segment. Residues Thr126 to Asn249 lie on the Extracellular side of the membrane. The N-linked (GlcNAc...) asparagine; by host glycan is linked to Asn192. A helical membrane pass occupies residues Trp250–Gly269. Residues Ser270–Gln274 lie on the Cytoplasmic side of the membrane. A helical transmembrane segment spans residues Lys275 to Ser290. The Extracellular segment spans residues Ile291 to Ser745. A Glycyl lysine isopeptide (Lys-Gly) (interchain with G-Cter in ubiquitin) cross-link involves residue Lys328. 2 disulfide bridges follow: Cys350–Cys406 and Cys382–Cys411. The interval Asp388 to Gly401 is fusion peptide. N-linked (GlcNAc...) asparagine; by host glycosylation is present at Asn444. 2 disulfide bridges follow: Cys480-Cys581 and Cys598-Cys629. Residue Lys571 forms a Glycyl lysine isopeptide (Lys-Gly) (interchain with G-Cter in ubiquitin) linkage. Residues Leu746 to Leu767 traverse the membrane as a helical segment. At Asn768–Ser773 the chain is on the cytoplasmic side. Residues Ile774–Ala794 form a helical membrane-spanning segment. Residues Asp795–Lys1177 are Lumenal-facing. 6 disulfide bridges follow: Cys798–Cys809, Cys849–Cys937, Cys973–Cys1017, Cys1074–Cys1123, Cys1085–Cys1106, and Cys1107–Cys1110. N-linked (GlcNAc...) asparagine; by host glycosylation is found at Asn924 and Asn1001. Residues Ile1178–Ser1198 form a helical membrane-spanning segment. Residues Asp1199–Val1220 are Cytoplasmic-facing. Residues Ala1221 to Phe1241 traverse the membrane as a helical segment. Residues Arg1242 to Asp1270 lie on the Lumenal side of the membrane. The chain crosses the membrane as a helical span at residues Leu1271–Pro1291. At Arg1292–Asn1295 the chain is on the cytoplasmic side. The helical transmembrane segment at Ile1296–Trp1316 threads the bilayer. Over Arg1317–Met1345 the chain is Lumenal. The chain crosses the membrane as a helical span at residues Ala1346 to Leu1366. Residues Thr1367–Ser1373 lie on the Cytoplasmic side of the membrane. A helical transmembrane segment spans residues Trp1374–Ala1394. The Lumenal segment spans residues Lys1395–Asp1397. The chain crosses the membrane as a helical span at residues Ile1398–Gly1418. The Cytoplasmic segment spans residues Lys1419–Lys1472. Residues Ile1425–Pro1464 are interacts with and activates NS3 protease. Positions Gly1429–Asp1451 are disordered. Positions Val1473–Trp1493 form an intramembrane region, helical. Residues Tyr1494–Thr2170 are Lumenal-facing. The Peptidase S7 domain occupies Ser1503–Cys1680. Catalysis depends on charge relay system; for serine protease NS3 activity residues His1553, Asp1577, and Ser1637. The Helicase ATP-binding domain maps to Pro1683–Glu1839. The tract at residues Lys1687–Gln1690 is important for RNA-binding. Residue Leu1696–Thr1703 participates in ATP binding. The DEAH box motif lies at Asp1787–His1790. Residues Pro1834 to Glu2013 enclose the Helicase C-terminal domain. Residue Lys1891 is modified to N6-acetyllysine; by host. A helical transmembrane segment spans residues Leu2171 to Leu2191. Residues Met2192–Lys2195 are Lumenal-facing. The segment at residues Gly2196–Leu2216 is an intramembrane region (helical). The Cytoplasmic portion of the chain corresponds to Ser2217–Glu2218. The chain crosses the membrane as a helical span at residues Ile2219 to Ile2239. Residues Pro2240–Ala2254 lie on the Lumenal side of the membrane. Positions Ile2255 to Ala2269 form an intramembrane region, helical. At Asn2270–Ser2307 the chain is on the lumenal side. An intramembrane region (helical) is located at residues Ala2308–Thr2328. Over Thr2329–Gly2344 the chain is Lumenal. The helical transmembrane segment at Val2345–Leu2365 threads the bilayer. Topologically, residues Met2366–Pro2375 are cytoplasmic. Residues Leu2376–Leu2396 form a helical membrane-spanning segment. The Lumenal segment spans residues Gln2397 to Gln2441. A helical transmembrane segment spans residues Val2442 to Gly2462. The Cytoplasmic segment spans residues Glu2463–Leu3423. The mRNA cap 0-1 NS5-type MT domain occupies Gly2521 to Ala2785. Lys2533–Met2539 is a binding site for GTP. Ser2576 contacts S-adenosyl-L-methionine. The residue at position 2576 (Ser2576) is a Phosphoserine. Lys2581 acts as the For 2'-O-MTase activity in catalysis. The tract at residues Val2597 to Leu2600 is SUMO-interacting motif (SIM). 10 residues coordinate S-adenosyl-L-methionine: Gly2606, Trp2607, Thr2624, Lys2625, His2630, Glu2631, Asp2651, Val2652, Asp2666, and Ile2667. Asp2666 (for 2'-O-MTase activity) is an active-site residue. Glu2669 to Glu2675 contacts GTP. Lys2702 acts as the For 2'-O-MTase activity in catalysis. Arg2733–Ser2735 contributes to the GTP binding site. The active-site For 2'-O-MTase activity is Glu2738. Tyr2740 is an S-adenosyl-L-methionine binding site. The Nuclear localization signal (NLS) signature appears at Lys2908–Val2914. Residues Glu2959, His2963, Cys2968, and Cys2971 each coordinate Zn(2+). The RdRp catalytic domain maps to Gly3049–Ala3199. The Zn(2+) site is built by His3234, Cys3250, and Cys3369.

It in the N-terminal section; belongs to the class I-like SAM-binding methyltransferase superfamily. mRNA cap 0-1 NS5-type methyltransferase family. In terms of assembly, homodimer. Interacts with host SERTAD3; this interaction promotes capsid protein C degradation. Interacts with host CAPRIN1; this interaction is probably linked to the inhibition of stress granules formation by the virus. Interacts with host G3BP1; this interaction is probably linked to the inhibition of stress granules formation by the virus. Forms heterodimers with envelope protein E in the endoplasmic reticulum and Golgi. Interacts with non-structural protein 2A. As to quaternary structure, homodimer; in the endoplasmic reticulum and Golgi. Interacts with host TYRO3, AXL and DC-SIGN proteins. Interacts with non-structural protein 2A. Interacts with host HAVCR1; this interaction likely mediates virus attachment to host cell. Interacts with host NCAM1. Interacts with host HSPA5. Interacts with Aedes aegypti SRPN25, APY and venom allergen-1 salivary proteins; the interactions do not affect Zika virus replication in human endothelial cells and keratinocytes. In terms of assembly, homodimer; Homohexamer when secreted. Interacts with host TBK1. Interacts with host USP8. Interacts with envelope protein E. Interacts with the structural protein prM/E complex, and the NS2B/NS3 protease complex. As to quaternary structure, forms a heterodimer with serine protease NS3. May form homooligomers. Interacts with human SPCS1. Interacts with non-structural protein 2A. In terms of assembly, forms a heterodimer with NS2B. Interacts with NS4B. Interacts with unphosphorylated RNA-directed RNA polymerase NS5; this interaction stimulates RNA-directed RNA polymerase NS5 guanylyltransferase activity. Interacts with non-structural protein 2A. Interacts with host SHFL; this interaction promotes NS3 degradation via a lysosome-dependent pathway. Interacts with host CEP63; this interaction disorganizes the centrosome and inhibits host innate immune response. May interact with host ANKLE2; the interaction may cause defects in brain development, such as microcephaly. May interact with host SRPRA and SEC61G. As to quaternary structure, interacts with serine protease NS3. Interacts with NS1. In terms of assembly, homodimer; dimerization may negatively regulate the GTase activity, a crucial step in the capping process. Interacts with host STAT2; this interaction inhibits the phosphorylation of the latter, and, when all viral proteins are present (polyprotein), targets STAT2 for degradation. Interacts with host TBK1 and IKBKE; these interactions lead to the inhibition of the host RIG-I signaling pathway. Interacts with host PAF1 complex; the interaction may prevent the recruitment of the host PAF1 complex to interferon-responsive genes, and thus reduces the immune response. Interacts with serine protease NS3. Interacts with host KPNA2. Interacts with host ZSWIM8; this interaction allows STAT2 binding to ZSWIM8 and subsequent proteasomal degradation leading to inhibition of interferon signaling. In terms of processing, specific enzymatic cleavages in vivo yield mature proteins. Cleavages in the lumen of endoplasmic reticulum are performed by host signal peptidase, whereas cleavages in the cytoplasmic side are performed by serine protease NS3. Signal cleavage at the 2K-4B site requires a prior NS3 protease-mediated cleavage at the 4A-2K site. Post-translationally, cleaved in post-Golgi vesicles by a host furin, releasing the mature small envelope protein M, and peptide pr. This cleavage is incomplete as up to 30% of viral particles still carry uncleaved prM. N-glycosylation plays a role in virulence in mammalian and mosquito hosts, but may have no effect on neurovirulence. In terms of processing, ubiquitination by host TRIM7 promotes virus attachment and fusion of the virus and the host endosome membrane. Post-translationally, N-glycosylated. The excreted form is glycosylated, which is required for efficient secretion of the protein from infected cells. Ubiquitination by host TRIM22 leads to proteasomal degradation. In terms of processing, acetylated by host KAT5. Acetylation modulates NS3 RNA-binding and unwinding activities and plays an important positive role for viral replication. Post-translationally, phosphorylated on serines residues. This phosphorylation may trigger NS5 nuclear localization. Sumoylated, required for regulating IFN induced interferon stimulated genes/ISGs.

Its subcellular location is the virion. It localises to the host nucleus. The protein resides in the host cytoplasm. It is found in the host perinuclear region. The protein localises to the secreted. Its subcellular location is the virion membrane. It localises to the host endoplasmic reticulum membrane. The enzyme catalyses a 5'-end (5'-triphosphoguanosine)-ribonucleoside in mRNA + S-adenosyl-L-methionine = a 5'-end (N(7)-methyl 5'-triphosphoguanosine)-ribonucleoside in mRNA + S-adenosyl-L-homocysteine. The catalysed reaction is a 5'-end (N(7)-methyl 5'-triphosphoguanosine)-ribonucleoside in mRNA + S-adenosyl-L-methionine = a 5'-end (N(7)-methyl 5'-triphosphoguanosine)-(2'-O-methyl-ribonucleoside) in mRNA + S-adenosyl-L-homocysteine + H(+). It carries out the reaction RNA(n) + a ribonucleoside 5'-triphosphate = RNA(n+1) + diphosphate. It catalyses the reaction Selective hydrolysis of -Xaa-Xaa-|-Yaa- bonds in which each of the Xaa can be either Arg or Lys and Yaa can be either Ser or Ala.. The enzyme catalyses a ribonucleoside 5'-triphosphate + H2O = a ribonucleoside 5'-diphosphate + phosphate + H(+). The catalysed reaction is ATP + H2O = ADP + phosphate + H(+). Its function is as follows. Plays a role in virus budding by binding to the cell membrane and gathering the viral RNA into a nucleocapsid that forms the core of the mature virus particle. During virus entry, may induce genome penetration into the host cytoplasm after hemifusion induced by the surface proteins. Can migrate to the cell nucleus where it modulates host functions. Inhibits the integrated stress response (ISR) in the infected cell. Inhibits RNA silencing by interfering with host Dicer. Functionally, prevents premature fusion activity of envelope proteins in trans-Golgi by binding to envelope protein E at pH 6.0. After virion release in extracellular space, gets dissociated from E dimers. In terms of biological role, plays a role in host immune defense modulation and protection of envelope protein E during virion synthesis. PrM-E cleavage is inefficient, many virions are only partially matured and immature prM-E proteins could play a role in immune evasion. Contributes to fetal microcephaly in humans. Acts as a chaperone for envelope protein E during intracellular virion assembly by masking and inactivating envelope protein E fusion peptide. prM is the only viral peptide matured by host furin in the trans-Golgi network probably to avoid catastrophic activation of the viral fusion activity in acidic Golgi compartment prior to virion release. Its function is as follows. May play a role in virus budding. Exerts cytotoxic effects by activating a mitochondrial apoptotic pathway through M ectodomain. May display a viroporin activity. Binds to host cell surface receptors and mediates fusion between viral and cellular membranes. Efficient virus attachment to cell is, at least in part, mediated by host HAVCR1 in a cell-type specific manner. In addition, host NCAM1 can also be used as entry receptor. Interaction with host HSPA5 plays an important role in the early stages of infection as well. Envelope protein is synthesized in the endoplasmic reticulum and forms a heterodimer with protein prM. The heterodimer plays a role in virion budding in the ER, and the newly formed immature particle is covered with 60 spikes composed of heterodimers between precursor prM and envelope protein E. The virion is transported to the Golgi apparatus where the low pH causes the dissociation of PrM-E heterodimers and formation of E homodimers. PrM-E cleavage is inefficient, many virions are only partially matured and immature prM-E proteins could play a role in immune evasion. Functionally, plays a role in the inhibition of host RLR-induced interferon-beta activation by targeting TANK-binding kinase 1/TBK1. In addition, recruits the host deubiquitinase USP8 to cleave 'Lys-11'-linked polyubiquitin chains from caspase-1/CASP1 thus inhibiting its proteasomal degradation. In turn, stabilized CASP1 promotes cleavage of cGAS, which inhibits its ability to recognize mitochondrial DNA release and initiate type I interferon signaling. In terms of biological role, component of the viral RNA replication complex that recruits genomic RNA, the structural protein prM/E complex, and the NS2B/NS3 protease complex to the virion assembly site and orchestrates virus morphogenesis. Antagonizes also the host MDA5-mediated induction of alpha/beta interferon antiviral response. May disrupt adherens junction formation and thereby impair proliferation of radial cells in the host cortex. Its function is as follows. Required cofactor for the serine protease function of NS3. Displays three enzymatic activities: serine protease, NTPase and RNA helicase. NS3 serine protease, in association with NS2B, performs its autocleavage and cleaves the polyprotein at dibasic sites in the cytoplasm: C-prM, NS2A-NS2B, NS2B-NS3, NS3-NS4A, NS4A-2K and NS4B-NS5. NS3 RNA helicase binds RNA and unwinds dsRNA in the 3' to 5' direction. Inhibits the integrated stress response (ISR) in the infected cell by blocking stress granules assembly. Disrupts host centrosome organization in a CEP63-dependent manner to degrade host TBK1 and inhibits innate immune response. Functionally, regulates the ATPase activity of the NS3 helicase activity. NS4A allows NS3 helicase to conserve energy during unwinding. Cooperatively with NS4B suppresses the Akt-mTOR pathway and leads to cellular dysregulation. By inhibiting host ANKLE2 functions, may cause defects in brain development, such as microcephaly. Also antagonizes the host MDA5-mediated induction of alpha/beta interferon antiviral response. Inhibits the integrated stress response (ISR) in the infected cell by blocking stress granules assembly. In terms of biological role, functions as a signal peptide for NS4B and is required for the interferon antagonism activity of the latter. Its function is as follows. Induces the formation of ER-derived membrane vesicles where the viral replication takes place. Also plays a role in the inhibition of host RLR-induced interferon-beta production at TANK-binding kinase 1/TBK1 level. Cooperatively with NS4A suppresses the Akt-mTOR pathway and leads to cellular dysregulation. Replicates the viral (+) and (-) RNA genome, and performs the capping of genomes in the cytoplasm. Methylates viral RNA cap at guanine N-7 and ribose 2'-O positions. Once sufficient NS5 is expressed, binds to the cap-proximal structure and inhibits further translation of the viral genome. Besides its role in RNA genome replication, also prevents the establishment of a cellular antiviral state by blocking the interferon-alpha/beta (IFN-alpha/beta) signaling pathway. Mechanistically, interferes with host kinases TBK1 and IKKE upstream of interferon regulatory factor 3/IRF3 to inhibit the RIG-I pathway. Also antagonizes type I interferon signaling by targeting STAT2 for degradation by the proteasome thereby preventing activation of JAK-STAT signaling pathway. Mechanistically, acts as a scaffold protein to connect host ZSWIM8/CUL3 ligase complex and STAT2, leading to STAT2 degradation. Within the host nucleus, disrupts host SUMO1 and STAT2 co-localization with PML, resulting in PML degradation. May also reduce immune responses by preventing the recruitment of the host PAF1 complex to interferon-responsive genes. This chain is Genome polyprotein, found in Zika virus (isolate ZIKV/Human/French Polynesia/10087PF/2013) (ZIKV).